The chain runs to 88 residues: MAKSKTPAKRARRAEANRLRNKAYKSKLKTAIKNYENAIIAEDLDTASNKLLQVTSLLDRSITKGILHKNNVARKKSALSKKLNSISQ.

It belongs to the bacterial ribosomal protein bS20 family.

In terms of biological role, binds directly to 16S ribosomal RNA. In Syntrophomonas wolfei subsp. wolfei (strain DSM 2245B / Goettingen), this protein is Small ribosomal subunit protein bS20.